A 320-amino-acid polypeptide reads, in one-letter code: Eukaryotic translation initiation factor 3 subunit G (320 aa).

The segment at 1 to 25 (MPTGDFDSKPSWADQVEEEGEDDKC) is disordered. Residues S8 and S11 each carry the phosphoserine modification. Phosphothreonine occurs at positions 38 and 41. A phosphoserine mark is found at S42, S189, S223, and S264. A disordered region spans residues 209–234 (KTGKYVPPSLRDGASRRGESMQPNRR). Over residues 221–234 (GASRRGESMQPNRR) the composition is skewed to basic and acidic residues. The RRM domain maps to 239–317 (ATIRVTNLSE…LILNVEWAKP (79 aa)).

The protein belongs to the eIF-3 subunit G family. Component of the eukaryotic translation initiation factor 3 (eIF-3) complex, which is composed of 13 subunits: EIF3A, EIF3B, EIF3C, EIF3D, EIF3E, EIF3F, EIF3G, EIF3H, EIF3I, EIF3J, EIF3K, EIF3L and EIF3M. The eIF-3 complex appears to include 3 stable modules: module A is composed of EIF3A, EIF3B, EIF3G and EIF3I; module B is composed of EIF3F, EIF3H, and EIF3M; and module C is composed of EIF3C, EIF3D, EIF3E, EIF3K and EIF3L. EIF3C of module C binds EIF3B of module A and EIF3H of module B, thereby linking the three modules. EIF3J is a labile subunit that binds to the eIF-3 complex via EIF3B. The eIF-3 complex interacts with RPS6KB1 under conditions of nutrient depletion. Mitogenic stimulation leads to binding and activation of a complex composed of FRAP1 and RAPTOR, leading to phosphorylation and release of RPS6KB1 and binding of EIF4B to eIF-3. Interacts (via C-terminus) with AIFM1 (via N-terminus). Interacts with DHX33; the interaction is independent of RNA. Post-translationally, phosphorylated. Phosphorylation is enhanced upon serum stimulation.

It is found in the cytoplasm. The protein resides in the nucleus. It localises to the perinuclear region. RNA-binding component of the eukaryotic translation initiation factor 3 (eIF-3) complex, which is required for several steps in the initiation of protein synthesis. The eIF-3 complex associates with the 40S ribosome and facilitates the recruitment of eIF-1, eIF-1A, eIF-2:GTP:methionyl-tRNAi and eIF-5 to form the 43S pre-initiation complex (43S PIC). The eIF-3 complex stimulates mRNA recruitment to the 43S PIC and scanning of the mRNA for AUG recognition. The eIF-3 complex is also required for disassembly and recycling of post-termination ribosomal complexes and subsequently prevents premature joining of the 40S and 60S ribosomal subunits prior to initiation. The eIF-3 complex specifically targets and initiates translation of a subset of mRNAs involved in cell proliferation, including cell cycling, differentiation and apoptosis, and uses different modes of RNA stem-loop binding to exert either translational activation or repression. This subunit can bind 18S rRNA. The chain is Eukaryotic translation initiation factor 3 subunit G from Bos taurus (Bovine).